Here is a 138-residue protein sequence, read N- to C-terminus: Thyrotropin subunit beta (138 aa).

The N-terminal stretch at 1 to 20 is a signal peptide; sequence MTALFLMSMLFGLTCGQAMS. Intrachain disulfides connect Cys22–Cys72, Cys36–Cys87, Cys39–Cys125, Cys47–Cys103, Cys51–Cys105, and Cys108–Cys115. Asn43 carries N-linked (GlcNAc...) asparagine glycosylation. Residues 133 to 138 constitute a propeptide that is removed on maturation; that stretch reads LVGFSV.

Belongs to the glycoprotein hormones subunit beta family. As to quaternary structure, heterodimer of a common alpha chain and a unique beta chain which confers biological specificity to thyrotropin, lutropin, follitropin and gonadotropin.

It localises to the secreted. In terms of biological role, indispensable for the control of thyroid structure and metabolism. This chain is Thyrotropin subunit beta (TSHB), found in Homo sapiens (Human).